We begin with the raw amino-acid sequence, 255 residues long: 4-hydroxy-tetrahydrodipicolinate reductase (255 aa).

NAD(+) contacts are provided by residues 9 to 14 (GYRGKM), 89 to 91 (GTT), and 115 to 118 (APNF). His-145 (proton donor/acceptor) is an active-site residue. His-146 provides a ligand contact to (S)-2,3,4,5-tetrahydrodipicolinate. Lys-149 (proton donor) is an active-site residue. 155 to 156 (GT) serves as a coordination point for (S)-2,3,4,5-tetrahydrodipicolinate.

This sequence belongs to the DapB family.

It is found in the cytoplasm. It carries out the reaction (S)-2,3,4,5-tetrahydrodipicolinate + NAD(+) + H2O = (2S,4S)-4-hydroxy-2,3,4,5-tetrahydrodipicolinate + NADH + H(+). It catalyses the reaction (S)-2,3,4,5-tetrahydrodipicolinate + NADP(+) + H2O = (2S,4S)-4-hydroxy-2,3,4,5-tetrahydrodipicolinate + NADPH + H(+). It participates in amino-acid biosynthesis; L-lysine biosynthesis via DAP pathway; (S)-tetrahydrodipicolinate from L-aspartate: step 4/4. Its function is as follows. Catalyzes the conversion of 4-hydroxy-tetrahydrodipicolinate (HTPA) to tetrahydrodipicolinate. The polypeptide is 4-hydroxy-tetrahydrodipicolinate reductase (Streptococcus uberis (strain ATCC BAA-854 / 0140J)).